We begin with the raw amino-acid sequence, 426 residues long: C4-dicarboxylate transport protein (426 aa).

The next 8 helical transmembrane spans lie at V8–P28, L44–M64, L78–V98, G148–G168, V173–T193, L222–A242, G297–A317, and A355–I375.

It belongs to the dicarboxylate/amino acid:cation symporter (DAACS) (TC 2.A.23) family.

It localises to the cell inner membrane. Responsible for the transport of dicarboxylates such as succinate, fumarate, and malate from the periplasm across the membrane. The chain is C4-dicarboxylate transport protein from Paraburkholderia xenovorans (strain LB400).